The sequence spans 120 residues: UPF0344 protein lin2366 (120 aa).

A run of 4 helical transmembrane segments spans residues 3-23 (GYVHLISWVAIVVLTVTALLI), 33-53 (MLQMINRVFYILVILSGIMMV), 62-82 (ILAIFKILMGIIVIGVVEMLL), and 92-112 (GMFLMIFIIVVVITVSLGFYL).

Belongs to the UPF0344 family.

It is found in the cell membrane. The chain is UPF0344 protein lin2366 from Listeria innocua serovar 6a (strain ATCC BAA-680 / CLIP 11262).